The primary structure comprises 1221 residues: Reverse gyrase subunit B (1221 aa).

Residues 56–97 (NEPVAIFGSSCVLCGGDCSSVRLTSRIGICERCLPVDTETLR) form an RG N-terminal-type zinc finger. The Zn(2+) site is built by Cys-66, Cys-69, Cys-85, and Cys-88. ATP contacts are provided by residues Gln-161 and 178-185 (APTGTGKT). The region spanning 165 to 400 (TRRLVKGCSF…AVVRELFDFE (236 aa)) is the Helicase ATP-binding domain. Residues 284 to 287 (DDVD) carry the DEAD box motif. The Helicase C-terminal domain maps to 424–600 (AVERIVRKAG…PLSLNTLMKL (177 aa)). Residues 779–935 (SALMIVESPN…QVYRTEFHEV (157 aa)) form the Toprim domain. Glu-785 contacts Mg(2+). An RG C-terminal-type zinc finger spans residues 856–882 (LGRCSECGEQVVGSEECPNCGGEVELK). Residues Cys-859, Cys-862, Cys-872, and Cys-875 each contribute to the Zn(2+) site. Asp-904 contacts Mg(2+). Positions 953 to 1221 (DAGRVSAQIL…MLHLAGVSGR (269 aa)) constitute a Topo IA-type catalytic domain.

In the C-terminal section; belongs to the type IA topoisomerase family. The protein in the N-terminal section; belongs to the DEAD box helicase family. DDVD subfamily. Heterodimer of an RgyrA and RgyrB subunit. The topoisomerase domain is shared between the two subunits. The cofactor is Zn(2+). It depends on Mg(2+) as a cofactor. In terms of processing, the N-terminus is partially blocked.

It localises to the cytoplasm. It carries out the reaction ATP + H2O = ADP + phosphate + H(+). Its function is as follows. Modifies the topological state of DNA by introducing positive supercoils in an ATP-dependent process; dATP also allows positive supercoiling. Increases the linking number in steps of +1. Only this subunit binds ATP, it does so in a DNA- and RgyA-independent manner. Hydrolyzes ATP only in the presence of DNA. The RgyA subunit transiently cleaves a single DNA strand and remains covalently bound to the 5' DNA end probably through a tyrosine residue. It changes linking number in steps of one, and nicks DNA preferentially at 5'-CNNN | 3'-sites with a strong preference for 4 pyrimidine residues. There are about 1000 heterodimers per cell. May be involved in rewinding the DNA strands in the regions of the chromosome that have opened up to allow transcription or replication. This subunit expressed in E.coli only has DNA-dependent ATPase activity at 80 degrees Celsius. Reverse gyrase activity is reconstituted after incubation at 80 degrees Celsius for 5 minutes, positive supercoiling requires ATP and Mg(2+). In the presence of ATP it binds and nicks substrate but does not make closed product. The chain is Reverse gyrase subunit B from Methanopyrus kandleri (strain AV19 / DSM 6324 / JCM 9639 / NBRC 100938).